The primary structure comprises 837 residues: SLIT and NTRK-like protein 4 (837 aa).

A signal peptide spans 1–18 (MFLWLFLIVSALISSTNA). The Extracellular portion of the chain corresponds to 19–618 (DSDISVEICN…SPPGGPVPLS (600 aa)). LRR repeat units follow at residues 60–81 (NFYH…TFVN), 84–105 (HAVS…AFLG), 108–129 (ALKQ…TFLG), 132–153 (NLEY…AFNK), 156–177 (KLKV…IFRF), and 179–200 (SLTH…GVLE). An N-linked (GlcNAc...) asparagine glycan is attached at Asn-81. Residues 213–264 (NPWNCSCDLLPLKAWLENMPYNIYIGEAICETPSDLYGRLLKETNKQELCPM) form the LRRCT 1 domain. N-linked (GlcNAc...) asparagine glycosylation is present at Asn-325. The LRRNT domain occupies 333–375 (QTRVPPLTPCPVPCFCKTHPSDLGLSVNCQEKNIQSMSELTPK). LRR repeat units lie at residues 378-399 (NAKK…DFTE), 402-423 (GLDL…VFHN), 426-447 (NLRR…IFSG), 450-471 (NLQY…TFDS), 474-495 (NLQL…IFSG), and 497-518 (PLAR…GVLD). A glycan (N-linked (GlcNAc...) asparagine) is linked at Asn-423. In terms of domain architecture, LRRCT 2 spans 531–582 (NPWDCTCDLVALKLWLEKLNDGIVVKELKCETPVQFANIELKSLKNEILCPK). The chain crosses the membrane as a helical span at residues 619-639 (ILILSILVVLILTVFVAFCLL). Residues 640 to 837 (VFVLRRNKKP…LEEQTALNKI (198 aa)) are Cytoplasmic-facing.

This sequence belongs to the SLITRK family. As to quaternary structure, interacts (via LRR 1 and 2 repeats) with PTPRD (via extracellular domain). In terms of tissue distribution, in the adult, significant expression is detected only in the brain. Broadly expressed in embryonic brain with highest expression in subventricular zone, subplate, cortical plate, pyramidal cell layer of hippocampus, thalamus and hypothalamus.

It localises to the membrane. It is found in the cell membrane. In terms of biological role, it is involved in synaptogenesis and promotes synapse differentiation. Suppresses neurite outgrowth. In Mus musculus (Mouse), this protein is SLIT and NTRK-like protein 4 (Slitrk4).